Consider the following 503-residue polypeptide: Cytochrome P450 3A9 (503 aa).

Cys442 provides a ligand contact to heme.

It belongs to the cytochrome P450 family. Heme serves as cofactor. In terms of tissue distribution, mainly expressed in olfactory epithelium.

Its subcellular location is the endoplasmic reticulum membrane. It is found in the microsome membrane. It carries out the reaction an organic molecule + reduced [NADPH--hemoprotein reductase] + O2 = an alcohol + oxidized [NADPH--hemoprotein reductase] + H2O + H(+). In terms of biological role, this isozyme seems to be implicated in olfaction. Active in the demethylation of erythromycin as well as benzphetamine. The protein is Cytochrome P450 3A9 (Cyp3a9) of Rattus norvegicus (Rat).